A 217-amino-acid chain; its full sequence is Probable chemoreceptor glutamine deamidase CheD (217 aa).

The segment at Ala194 to Ser217 is disordered.

It belongs to the CheD family.

It carries out the reaction L-glutaminyl-[protein] + H2O = L-glutamyl-[protein] + NH4(+). Functionally, probably deamidates glutamine residues to glutamate on methyl-accepting chemotaxis receptors (MCPs), playing an important role in chemotaxis. The sequence is that of Probable chemoreceptor glutamine deamidase CheD from Cupriavidus pinatubonensis (strain JMP 134 / LMG 1197) (Cupriavidus necator (strain JMP 134)).